The chain runs to 151 residues: Small heat shock protein HspH (151 aa).

Residues 28–138 enclose the sHSP domain; that stretch reads RAGEDNYPPY…KPRRIAINAA (111 aa).

It belongs to the small heat shock protein (HSP20) family.

In Bradyrhizobium diazoefficiens (strain JCM 10833 / BCRC 13528 / IAM 13628 / NBRC 14792 / USDA 110), this protein is Small heat shock protein HspH (hspH).